The sequence spans 157 residues: Immediate-early protein ICP-18 (157 aa).

This Frog virus 3 (isolate Goorha) (FV-3) protein is Immediate-early protein ICP-18.